A 374-amino-acid chain; its full sequence is Chaperone protein DnaJ (374 aa).

One can recognise a J domain in the interval 4–68 (DYYEILGVSR…ETRNRYDRFG (65 aa)). A CR-type zinc finger spans residues 133-215 (GGEKEIRIRH…CGGSGRRQET (83 aa)). Zn(2+)-binding residues include C146, C149, C163, C166, C189, C192, C203, and C206. 4 CXXCXGXG motif repeats span residues 146-153 (CQTCKGSG), 163-170 (CTTCSGTG), 189-196 (CPTCDGAG), and 203-210 (CDVCGGSG).

Belongs to the DnaJ family. As to quaternary structure, homodimer. Zn(2+) serves as cofactor.

The protein resides in the cytoplasm. Participates actively in the response to hyperosmotic and heat shock by preventing the aggregation of stress-denatured proteins and by disaggregating proteins, also in an autonomous, DnaK-independent fashion. Unfolded proteins bind initially to DnaJ; upon interaction with the DnaJ-bound protein, DnaK hydrolyzes its bound ATP, resulting in the formation of a stable complex. GrpE releases ADP from DnaK; ATP binding to DnaK triggers the release of the substrate protein, thus completing the reaction cycle. Several rounds of ATP-dependent interactions between DnaJ, DnaK and GrpE are required for fully efficient folding. Also involved, together with DnaK and GrpE, in the DNA replication of plasmids through activation of initiation proteins. The sequence is that of Chaperone protein DnaJ from Microcystis aeruginosa (strain NIES-843 / IAM M-2473).